The primary structure comprises 664 residues: Translation factor guf1, mitochondrial (664 aa).

The transit peptide at 1–43 (MRGCLQLARWLSAGPKCPAASLPKAPSGLYNTIRSFTSSAQLA) directs the protein to the mitochondrion. The region spanning 66–246 (DRYRNFCIVA…TVVEKIPAPV (181 aa)) is the tr-type G domain. GTP-binding positions include 75–82 (AHVDHGKS), 139–143 (DTPGH), and 193–196 (NKVD).

The protein belongs to the TRAFAC class translation factor GTPase superfamily. Classic translation factor GTPase family. LepA subfamily.

The protein localises to the mitochondrion inner membrane. The enzyme catalyses GTP + H2O = GDP + phosphate + H(+). Its function is as follows. Promotes mitochondrial protein synthesis. May act as a fidelity factor of the translation reaction, by catalyzing a one-codon backward translocation of tRNAs on improperly translocated ribosomes. Binds to mitochondrial ribosomes in a GTP-dependent manner. This is Translation factor guf1, mitochondrial (guf1) from Aspergillus oryzae (strain ATCC 42149 / RIB 40) (Yellow koji mold).